Consider the following 111-residue polypeptide: MAKGGFPGGFNINNMIKQAQQMQEEIKKMQEELMQKTVEATAGGGMVKAVANGRKELVSIEINPDVVDKDDVETLEDLVLAAVNQALRNAEEMIASEMAKITGGLNIPGLF.

It belongs to the YbaB/EbfC family. Homodimer.

The protein resides in the cytoplasm. The protein localises to the nucleoid. Its function is as follows. Binds to DNA and alters its conformation. May be involved in regulation of gene expression, nucleoid organization and DNA protection. This Thermoanaerobacter pseudethanolicus (strain ATCC 33223 / 39E) (Clostridium thermohydrosulfuricum) protein is Nucleoid-associated protein Teth39_2199.